Reading from the N-terminus, the 507-residue chain is MADFIGAVDQGTTSTRFMIFDHGGNEVAKHQLEHEQILPRSGWVEHDPVEIWERTNSVMQNALRNGGLSGTDLAAIGITNQRETTVVWDPRTGRPYYNAIVWQDTRTDAIAANLERSGRGDVIRRKAGLPPATYFSGGKIQWILENVDGVREAAEQGHAVFGNTDSWVLWNLTGGPDGGIHATDVTNASRTMLMNLETLDWDDELLGFFGIPRGMLPTINPSSHPEAFGTTRTSRPLRAAVPITGVLGDQHAATVGQVCFSPGEAKNTYGTGNFLVLNTGTELVRSQHGLLTTVAYQFGDNPPVYALEGSIAVTGSAVQWLRDQMKIIKTAAESEELARTVEDNGGMYFVPAFSGLFAPYWRSDARGAIVGLARYNDNAHLARATLEAICYQSRDVVVAMEQDSSVHLDVLRVDGGVTANDLCMQIQADILGVPVSRPVVAETTALGAAYAAGLATGFWRHTDELRTHWSESRRWEPQWSEERRAQGYAGWKMAVERTLDWVKVPES.

ADP is bound at residue Thr12. Residues Thr12, Thr13, and Ser14 each contribute to the ATP site. Residue Thr12 participates in sn-glycerol 3-phosphate binding. Arg16 contacts ADP. Residues Arg82, Glu83, Tyr134, and Asp249 each coordinate sn-glycerol 3-phosphate. The glycerol site is built by Arg82, Glu83, Tyr134, Asp249, and Gln250. Residues Thr271 and Gly315 each contribute to the ADP site. 4 residues coordinate ATP: Thr271, Gly315, Gln319, and Gly416. ADP is bound by residues Gly416 and Asn420.

This sequence belongs to the FGGY kinase family.

The enzyme catalyses glycerol + ATP = sn-glycerol 3-phosphate + ADP + H(+). The protein operates within polyol metabolism; glycerol degradation via glycerol kinase pathway; sn-glycerol 3-phosphate from glycerol: step 1/1. Its activity is regulated as follows. Inhibited by fructose 1,6-bisphosphate (FBP). Its function is as follows. Key enzyme in the regulation of glycerol uptake and metabolism. Catalyzes the phosphorylation of glycerol to yield sn-glycerol 3-phosphate. This Streptomyces coelicolor (strain ATCC BAA-471 / A3(2) / M145) protein is Glycerol kinase 1.